The primary structure comprises 460 residues: Chromosomal replication initiator protein DnaA (460 aa).

The interval 1–78 is domain I, interacts with DnaA modulators; the sequence is MENFWQACSA…VPVEVQFVLD (78 aa). Residues 78–123 form a domain II region; that stretch reads DPRLVAARRPAAQASVVSDRADDVPSNVLEPIPSNATDHTPRRDQS. The segment at 124 to 340 is domain III, AAA+ region; sequence RINTALTFDS…GALRKILAYS (217 aa). Residues Gly168, Gly170, Lys171, and Thr172 each coordinate ATP. The domain IV, binds dsDNA stretch occupies residues 341 to 460; that stretch reads RFHGKDITIE…LHVLEQTLKG (120 aa).

This sequence belongs to the DnaA family. As to quaternary structure, oligomerizes as a right-handed, spiral filament on DNA at oriC.

Its subcellular location is the cytoplasm. Its function is as follows. Plays an essential role in the initiation and regulation of chromosomal replication. ATP-DnaA binds to the origin of replication (oriC) to initiate formation of the DNA replication initiation complex once per cell cycle. Binds the DnaA box (a 9 base pair repeat at the origin) and separates the double-stranded (ds)DNA. Forms a right-handed helical filament on oriC DNA; dsDNA binds to the exterior of the filament while single-stranded (ss)DNA is stabiized in the filament's interior. The ATP-DnaA-oriC complex binds and stabilizes one strand of the AT-rich DNA unwinding element (DUE), permitting loading of DNA polymerase. After initiation quickly degrades to an ADP-DnaA complex that is not apt for DNA replication. Binds acidic phospholipids. The chain is Chromosomal replication initiator protein DnaA from Herminiimonas arsenicoxydans.